Here is an 89-residue protein sequence, read N- to C-terminus: Small ribosomal subunit protein uS15 (89 aa).

It belongs to the universal ribosomal protein uS15 family. As to quaternary structure, part of the 30S ribosomal subunit. Forms a bridge to the 50S subunit in the 70S ribosome, contacting the 23S rRNA.

Its function is as follows. One of the primary rRNA binding proteins, it binds directly to 16S rRNA where it helps nucleate assembly of the platform of the 30S subunit by binding and bridging several RNA helices of the 16S rRNA. In terms of biological role, forms an intersubunit bridge (bridge B4) with the 23S rRNA of the 50S subunit in the ribosome. The protein is Small ribosomal subunit protein uS15 of Nitrosomonas eutropha (strain DSM 101675 / C91 / Nm57).